The following is a 289-amino-acid chain: UPF0725 protein At1g27860 (289 aa).

The tract at residues 266–289 is disordered; that stretch reads DQQRSMTLPSGEQAESSKKRPRLS. Over residues 268-279 the composition is skewed to polar residues; it reads QRSMTLPSGEQA.

It belongs to the UPF0725 (EMB2204) family.

This chain is UPF0725 protein At1g27860, found in Arabidopsis thaliana (Mouse-ear cress).